The primary structure comprises 78 residues: Apolipoprotein C-I (78 aa).

The signal sequence occupies residues 1–26 (MRLILWLPVLVVVLLMVLEGPAPAQG).

It belongs to the apolipoprotein C1 family.

The protein localises to the secreted. Its function is as follows. Inhibitor of lipoprotein binding to the low density lipoprotein (LDL) receptor, LDL receptor-related protein, and very low density lipoprotein (VLDL) receptor. Associates with high density lipoproteins (HDL) and the triacylglycerol-rich lipoproteins in the plasma and makes up about 10% of the protein of the VLDL and 2% of that of HDL. Appears to interfere directly with fatty acid uptake and is also the major plasma inhibitor of cholesteryl ester transfer protein (CETP). Binds free fatty acids and reduces their intracellular esterification. Modulates the interaction of APOE with beta-migrating VLDL and inhibits binding of beta-VLDL to the LDL receptor-related protein. The chain is Apolipoprotein C-I (APOC1) from Puma concolor (Mountain lion).